Here is a 586-residue protein sequence, read N- to C-terminus: A-type ATP synthase subunit A (586 aa).

Residue 233 to 240 (GPFGSGKT) coordinates ATP.

This sequence belongs to the ATPase alpha/beta chains family. As to quaternary structure, has multiple subunits with at least A(3), B(3), C, D, E, F, H, I and proteolipid K(x).

It localises to the cell membrane. It carries out the reaction ATP + H2O + 4 H(+)(in) = ADP + phosphate + 5 H(+)(out). Its function is as follows. Component of the A-type ATP synthase that produces ATP from ADP in the presence of a proton gradient across the membrane. The A chain is the catalytic subunit. This is A-type ATP synthase subunit A from Methanococcus aeolicus (strain ATCC BAA-1280 / DSM 17508 / OCM 812 / Nankai-3).